Reading from the N-terminus, the 520-residue chain is MAYFNQHQSMISKRYLTFFSKSKKKKPFSAGQLIGLILGPLLFLLTLLFFHPQDLPWEGVYVLAITLWIATWWITEAIPIAATSLLPIVLLPLGHILTPEQVSSEYGNDIIFLFLGGFILAIAMERWNLHTRVALTIINLIGASTSKILLGFMVATGFLSMFVSNTAAVMIMIPIGLAIIKEAHDLQEANTNQTSIQKFEKSLVLAIGYAGTIGGLGTLIGTPPLIILKGQYMQHFGHEISFAKWMIVGIPTVIVLLGITWLYLRYVAFRHDLKYLPGGQTLIKQKLDELGKMKYEEKVVQTIFVLASLLWITREFLLKKWEVTSSVADGTIAIFISILLFVIPAKNTEKHRRIIDWEVAKELPWGVLILFGGGLALAKGISESGLAKWLGEQLKSLNGVSPILIVIVITIFVLFLTEVTSNTATATMILPILATLSVAVGVHPLLLMAPAAMAANCAYMLPVGTPPNAIIFGSGKISIKQMASVGFWVNLISAIIIILVVYYVMPIVLGIDINQPLPLK.

Helical transmembrane passes span 30–50 (AGQLIGLILGPLLFLLTLLFF), 55–75 (LPWEGVYVLAITLWIATWWIT), 77–97 (AIPIAATSLLPIVLLPLGHIL), 104–124 (SEYGNDIIFLFLGGFILAIAM), 160–180 (SMFVSNTAAVMIMIPIGLAII), 207–227 (IGYAGTIGGLGTLIGTPPLII), 242–262 (FAKWMIVGIPTVIVLLGITWL), 298–318 (KVVQTIFVLASLLWITREFLL), 323–343 (VTSSVADGTIAIFISILLFVI), 362–382 (ELPWGVLILFGGGLALAKGIS), 399–419 (GVSPILIVIVITIFVLFLTEV), 428–448 (MILPILATLSVAVGVHPLLLM), 452–472 (AMAANCAYMLPVGTPPNAIIF), and 491–511 (LISAIIIILVVYYVMPIVLGI).

The protein belongs to the SLC13A/DASS transporter (TC 2.A.47) family. NADC subfamily.

It is found in the cell membrane. Its function is as follows. Mediates the transport of the dicarboxylates fumarate, malate, and succinate across the cytoplasmic membrane via a Na(+)-electrochemical gradient. This is Sodium-dependent dicarboxylate transporter SdcS (sdcS) from Staphylococcus aureus (strain bovine RF122 / ET3-1).